Here is a 235-residue protein sequence, read N- to C-terminus: UPF0702 transmembrane protein YdfS (235 aa).

A run of 2 helical transmembrane segments spans residues 32-52 and 60-80; these read MTIF…GLAY and NMAI…FLSI.

It belongs to the UPF0702 family.

Its subcellular location is the cell membrane. The sequence is that of UPF0702 transmembrane protein YdfS (ydfS) from Bacillus subtilis (strain 168).